We begin with the raw amino-acid sequence, 1463 residues long: MLRNLILITLLVASGHGQTPVIGGTCKLGTADVQIGGKQTQFFLKCETTADSAEGEGVWVVKSRAAAAPSSVPSVPAENTQPQQHPKARKPASPNICEQDNGARESEVCAVSATCLQAHNDFPSSYLQCDQTTLRWVRKSCQENFLFNFEQQTCIVPKRMSSLSPSTSSPSNTENPCSKCPLGSACRNGNCIPLTTSNLCSDGSPPNNTCTRDPYSCPKGHFCTAQKVCCPSTALQSSIGCSTVCTIDESCPKGMTCQNNCCEERKLLRHPKVYRYATVEATNTIFEVDNDIFDSAAIESLPTQKPQRLDEIMAPGITPTPTRTTEPPKLRCLSSNTDEVNSLGGASSSSATCGGTNANCTSDEDCPTTFKCYQGCCKLAVCPRSLTAVKFTCKTQYHCRANEHCFFGGCCPKTIELAVIKSQVLTMSKDNEHTKETEKLIIGDCEVDTRVKKCDIDIICPEMSECVDGICCKQPPKARCGNGLMALSIPVHCSLSDDCPIASRCEYGKCCPFLSESADSTSDSVGETTPVIIKEEIISTATKVWKKVDKTSGVSINKNKCLSTQRCDLHTLCPPDFTCSLSGKCCKLNIHCPDGTVPETSCQSASNHDHCPSSSHKCTLLNKEHFACCYSPGLVVEGSVTAEVSSECPIGSVEVDPRFGTSCRYSLQCPSPYFCNQRGQQASGLVCTFSSCSNSNPCSVGTCNNGYCCSSGSNSGSAIIDSDTNSTTNPSQPETTKTKNNTKKSNSSKKHRKPKKKDVDPLSDPLLQNDFPIGPPGYGFPEHLSNLDEVLIRAQGDGVSCAGGFQSSLICSVGSECPAGLHCDTAINLCCPLLLPLTDPKNPKKRKTKRRKQKQDENEMEASANFPDSDPARFSSYSCGCMGGGSSNCVGCQNAPQIITIPQNSCPGGGYSVGGCSSGYCATGYSCIQNQCCPSYNSAPRISVYTCPSGGNAVGACMSGRCASGYTCSNNVCCPQTTTTNPFVCPDGTQAAGGCVNGQCGTGYTCSNGLCCAGTSTTVKCLDGSDAVGACIPSCTGDGCGGVQVSYYCGSGYTCTTGNICCPINSCPNGGEVLGPTINGLCPTGYTVQGNLCCSATCTDGSTGLPSVNGVCIDGYSLTNGVCCPASVTCTDEISIGPCTGTGFNGGCPAGYACDSNQVNCCPVVRYTDESCQVGPAIDGLCPPGYVVVYIPNSPLITNGVNPGTCIDLQCTTGLCLTANQIGDCDTATDAGTCPTGYTCFTNAGICCSTTTFSRLRIGNSRQMAQKPNYGRPLHSYMPPRFGGPSSSCSDGSLSSGPCMNGLCGIGLECQNGKCCSPSSNKPAGLLQSKCPSGDTAVSGCFPNGSCGTGYECVSSLNLCCPPGQPQTFPSFPGNNNGFNINNNNRFGSLSMSPRPIGARCQLDGECVGQAEGLSMCHAGVCQCSPIAYTQGIACVRRKSFQMNDDPVIDAANDDKSSSSVSV.

The N-terminal stretch at 1–17 is a signal peptide; that stretch reads MLRNLILITLLVASGHG. The interval 70–99 is disordered; that stretch reads SSVPSVPAENTQPQQHPKARKPASPNICEQ. Positions 94–164 constitute a Chitin-binding type-2 domain; sequence PNICEQDNGA…IVPKRMSSLS (71 aa). Cys-141 and Cys-154 form a disulfide bridge. 2 disordered regions span residues 720–773 and 841–869; these read IDSD…DFPI and KNPK…FPDS. A compositionally biased stretch (polar residues) spans 722-734; the sequence is SDTNSTTNPSQPE. Basic residues-rich tracts occupy residues 740-756 and 843-853; these read NNTK…KPKK and PKKRKTKRRKQ.

This chain is Chitin binding domain (ChtBD2) containing chtb-1, found in Caenorhabditis elegans.